We begin with the raw amino-acid sequence, 542 residues long: MHWLRTVAALREQVADWRGSTVGLVPTMGSLHEGHLSLIRRCRQECDHTVVSIFVNPLQFGPNEDWDRYPRDEEGDRALCEAAGVDVVFAPDPQEMGADPATGSDRTWVMPPESLLQTLCAPHRPGHFRGVATIVLQLLNLVQPQRAYFGQKDAQQLAIIQRLVRDLQIPTTIVPCSTVREADGLACSSRNRYLSAAERQVAAGLYRALRRGYDHWQAGDPSAEGILAAARAELEHTPELQLQYLELVDPQTLQPLPRVEDKGLLAIAAYVGQTRLIDNLLLSPEQGDPLPERVQHAAPPSSGTTSPPRRPLIAIDGPAGAGKSTVARAVAAQLQLLYLDTGAMYRAITWLALQRGIPLDDAEQLTQLAAQTQLTLQSGTSSTEPTRIWADGEEITQAIRSPEVTRWVSHVAAVPGVRQELVKRQRSIGRDGGAVLEGRDIGTHVFPDAELKVFLTASVGERAQRRQHQLQAQGQMVPLEELKAQIEQRDRRDSERLISPLRPAPDAILIDTDHLSQSEVQDKIVMLYRQLLERSGPARLDQ.

The segment at 1–280 (MHWLRTVAAL…VGQTRLIDNL (280 aa)) is pantoate--beta-alanine ligase. Residue 28 to 35 (MGSLHEGH) participates in ATP binding. His35 serves as the catalytic Proton donor. Residue Gln59 participates in (R)-pantoate binding. Gln59 is a beta-alanine binding site. 150 to 153 (GQKD) lines the ATP pocket. (R)-pantoate is bound at residue Gln156. ATP-binding positions include Val179 and 187-190 (CSSR). Residues 281 to 542 (LLSPEQGDPL…ERSGPARLDQ (262 aa)) form a cytidylate kinase region. The interval 287 to 311 (GDPLPERVQHAAPPSSGTTSPPRRP) is disordered.

In the N-terminal section; belongs to the pantothenate synthetase family. This sequence in the C-terminal section; belongs to the cytidylate kinase family. Type 1 subfamily.

It localises to the cytoplasm. It catalyses the reaction (R)-pantoate + beta-alanine + ATP = (R)-pantothenate + AMP + diphosphate + H(+). The enzyme catalyses CMP + ATP = CDP + ADP. The catalysed reaction is dCMP + ATP = dCDP + ADP. Its pathway is cofactor biosynthesis; (R)-pantothenate biosynthesis; (R)-pantothenate from (R)-pantoate and beta-alanine: step 1/1. Its function is as follows. Catalyzes the condensation of pantoate with beta-alanine in an ATP-dependent reaction via a pantoyl-adenylate intermediate. Catalyzes the transfer of a phosphate group from ATP to either CMP or dCMP to form CDP or dCDP and ADP, respectively. The polypeptide is Bifunctional pantoate ligase/cytidylate kinase (Synechococcus sp. (strain JA-2-3B'a(2-13)) (Cyanobacteria bacterium Yellowstone B-Prime)).